The primary structure comprises 252 residues: Chitooligosaccharide deacetylase (252 aa).

Mg(2+) is bound by residues histidine 61 and histidine 125.

It belongs to the YdjC deacetylase family. ChbG subfamily. As to quaternary structure, homodimer. The cofactor is Mg(2+).

It localises to the cytoplasm. The catalysed reaction is N,N'-diacetylchitobiose + H2O = N-acetyl-beta-D-glucosaminyl-(1-&gt;4)-D-glucosamine + acetate. The enzyme catalyses diacetylchitobiose-6'-phosphate + H2O = N'-monoacetylchitobiose-6'-phosphate + acetate. It participates in glycan degradation; chitin degradation. In terms of biological role, involved in the degradation of chitin. ChbG is essential for growth on the acetylated chitooligosaccharides chitobiose and chitotriose but is dispensable for growth on cellobiose and chitosan dimer, the deacetylated form of chitobiose. Deacetylation of chitobiose-6-P and chitotriose-6-P is necessary for both the activation of the chb promoter by the regulatory protein ChbR and the hydrolysis of phosphorylated beta-glucosides by the phospho-beta-glucosidase ChbF. Catalyzes the removal of only one acetyl group from chitobiose-6-P to yield monoacetylchitobiose-6-P, the inducer of ChbR and the substrate of ChbF. This Klebsiella pneumoniae (strain 342) protein is Chitooligosaccharide deacetylase.